The primary structure comprises 431 residues: Glutamate--tRNA ligase 1 (431 aa).

The 'HIGH' region motif lies at 6 to 16 (PSPTGDMHIGN). Positions 235–239 (KMSKR) match the 'KMSKS' region motif. Lys-238 contributes to the ATP binding site.

The protein belongs to the class-I aminoacyl-tRNA synthetase family. Glutamate--tRNA ligase type 1 subfamily. Monomer.

It localises to the cytoplasm. It catalyses the reaction tRNA(Glu) + L-glutamate + ATP = L-glutamyl-tRNA(Glu) + AMP + diphosphate. Catalyzes the attachment of glutamate to tRNA(Glu) in a two-step reaction: glutamate is first activated by ATP to form Glu-AMP and then transferred to the acceptor end of tRNA(Glu). The sequence is that of Glutamate--tRNA ligase 1 from Campylobacter concisus (strain 13826).